A 588-amino-acid polypeptide reads, in one-letter code: MDEMDEIVRIVNDSMWYVPNAFMDDGDNEGHISVNNVCHMYLAFFDVDISSHLFKLVIKHCDLNKRLKCGNSPLHCYTMNTRFNPSVLKILLRHGMRNFDSKDKKGHIPLHHYLIHSLSIDNKIFDILTDPIDDFSKSSDLLLCYLRYKFNGSLNYYVLYKLLTKGSDPNCVDEDGLTSLHYYCKHISAFHESNYYKSKSHTKMRAEKRFIYAIIDHGANINAVTKIGNTPLHTYLQQYTKHSPRVVYALLSRGADTRIRNNLDCTPIMEYIKNDCATGHILIMLLNWHEQKYGKLQKEEGQHLLYLFIKHNQGYGSRSLNILRYLLDRFDIQKDEYYNTMTPLHTAFQNCNNNVASYLVYIGYDINLPTKDDKTVFDLVFENRNIIYKADVVNDIIHHRLKVSLPMIKSLFYKMSEFSPYDDHYVKKIIAYCLLRDESFAELHTKFCLNEDYKSVFMKNISFDKIDSIIEKCSRDISLLKEIRISDTDLYTVLRTEDIRYHTYLEAIHSDKRISFPMYDDLIEQCHLSMEHKSKLVDKALNKLESTIDSQSRLSYLPPEIMRNIITKLSDYHLNSMLYGKNHYKYYP.

ANK repeat units follow at residues 69 to 101 (CGNS…NFDS), 175 to 223 (DGLT…NINA), 227 to 259 (IGNT…DTRI), 300 to 336 (EGQH…QKDE), and 339 to 368 (NTMT…DINL). Residues 557–574 (LPPEIMRNIITKLSDYHL) form a PRANC/F-box-like region.

Belongs to the orthopoxvirus OPG003 family.

Functionally, may be involved in virus-host protein interaction through the ankyrin repeats and PRANC regions. This is Ankyrin repeat protein OPG003 (OPG003) from Cynomys gunnisoni (Gunnison's prairie dog).